We begin with the raw amino-acid sequence, 211 residues long: SAGA-associated factor 11 homolog (211 aa).

An SGF11-type zinc finger spans residues 115-136 (CTCPHCDRLVAAARFAPHLEKC). The disordered stretch occupies residues 153-211 (TKEGASASSSSTSTYIQSGGNTGGTDDEDDVDWSSDKRKKKSTQNSRNNGSKKNNGKIF). The segment covering 157–166 (ASASSSSTST) has biased composition (low complexity). Ser-187 is modified (phosphoserine). A compositionally biased stretch (low complexity) spans 197-211 (NSRNNGSKKNNGKIF).

It belongs to the SGF11 family. As to quaternary structure, component of some SAGA transcription coactivator-HAT complexes, at least composed of Ada2b, not/nonstop, Pcaf/Gcn5, Sgf11 and Spt3. Within the SAGA complex, Sgf11, e(y)2, and not/nonstop form an additional subcomplex of SAGA called the DUB module (deubiquitination module). Interacts directly with not/nonstop. Interacts with the AMEX complex component xmas-2. Interacts with Cbp80; important for promoter recruitment of Sgf11 that is not associated with the DUB module.

The protein localises to the nucleus. Its subcellular location is the nucleoplasm. It localises to the cytoplasm. Functionally, component of the transcription regulatory histone acetylation (HAT) complex SAGA, a multiprotein complex that activates transcription by remodeling chromatin and mediating histone acetylation and deubiquitination. Within the SAGA complex, participates in a subcomplex that specifically deubiquitinates histone H2B. The SAGA complex is recruited to specific gene promoters by activators, where it is required for transcription. Required for nuclear receptor-mediated transactivation. Binds independently on SAGA to promoters in an RNA-dependent manner. Binds to mRNA and is essential for total mRNA export from the nucleus. Required to counteract heterochromatin silencing. Controls the development of neuronal connectivity in visual system by being required for accurate axon targeting in the optic lobe. Required for expression of ecdysone-induced genes such as br/broad. In Drosophila mojavensis (Fruit fly), this protein is SAGA-associated factor 11 homolog.